A 567-amino-acid polypeptide reads, in one-letter code: Probable diguanylate cyclase DgcQ (567 aa).

2 helical membrane-spanning segments follow: residues 20-40 (FGPGHVVNTCFLIVMLFSTLL) and 357-377 (IALTLLWGLFTAMLLISWGVI). The 136-residue stretch at 425-560 (QPFSVIQLDL…GRNRICASDA (136 aa)) folds into the GGDEF domain. A Mg(2+)-binding site is contributed by Asp433. Substrate is bound by residues Asn441, His446, and Asp450. Glu476 contacts Mg(2+). Glu476 serves as the catalytic Proton acceptor.

In terms of assembly, homodimer. Mg(2+) is required as a cofactor.

It is found in the cell inner membrane. It carries out the reaction 2 GTP = 3',3'-c-di-GMP + 2 diphosphate. Its pathway is glycan metabolism; bacterial cellulose biosynthesis. The protein operates within purine metabolism; 3',5'-cyclic di-GMP biosynthesis. In terms of biological role, catalyzes the synthesis of cyclic-di-GMP (c-di-GMP) via the condensation of 2 GTP molecules. Cyclic-di-GMP is a second messenger which controls cell surface-associated traits in bacteria. Involved in the regulation of cellulose production. This Salmonella typhi protein is Probable diguanylate cyclase DgcQ.